The sequence spans 299 residues: tRNA dimethylallyltransferase (299 aa).

13–20 is a binding site for ATP; the sequence is GPTASGKT. Substrate is bound at residue 15-20; the sequence is TASGKT. Residues 38–41 are interaction with substrate tRNA; it reads DSRQ.

It belongs to the IPP transferase family. As to quaternary structure, monomer. Requires Mg(2+) as cofactor.

It catalyses the reaction adenosine(37) in tRNA + dimethylallyl diphosphate = N(6)-dimethylallyladenosine(37) in tRNA + diphosphate. In terms of biological role, catalyzes the transfer of a dimethylallyl group onto the adenine at position 37 in tRNAs that read codons beginning with uridine, leading to the formation of N6-(dimethylallyl)adenosine (i(6)A). In Prochlorococcus marinus (strain MIT 9515), this protein is tRNA dimethylallyltransferase.